The following is a 396-amino-acid chain: Adenosine deaminase 1 (396 aa).

Residues 1–26 (MTSRSTEKSAAANPAAVSKTPSPDRI) form a disordered region. Residues histidine 35 and histidine 37 each contribute to the Zn(2+) site. Histidine 37, aspartate 39, and glycine 197 together coordinate substrate. Histidine 224 serves as a coordination point for Zn(2+). Catalysis depends on glutamate 227, which acts as the Proton donor. Residue aspartate 316 participates in Zn(2+) binding.

This sequence belongs to the metallo-dependent hydrolases superfamily. Adenosine and AMP deaminases family. Adenosine deaminase subfamily. As to quaternary structure, homotetramer. The cofactor is Zn(2+).

It catalyses the reaction adenosine + H2O + H(+) = inosine + NH4(+). The enzyme catalyses 2'-deoxyadenosine + H2O + H(+) = 2'-deoxyinosine + NH4(+). Its activity is regulated as follows. Coformycin and 2'-deoxycoformycin, whose structures mimic the transition state of the deamination reaction, are potent competitive inhibitors. In terms of biological role, catalyzes the hydrolytic deamination of adenosine and 2-deoxyadenosine. This Streptomyces coelicolor (strain ATCC BAA-471 / A3(2) / M145) protein is Adenosine deaminase 1.